A 291-amino-acid chain; its full sequence is Ribosomal RNA small subunit methyltransferase I (291 aa).

Belongs to the methyltransferase superfamily. RsmI family.

Its subcellular location is the cytoplasm. The catalysed reaction is cytidine(1402) in 16S rRNA + S-adenosyl-L-methionine = 2'-O-methylcytidine(1402) in 16S rRNA + S-adenosyl-L-homocysteine + H(+). Catalyzes the 2'-O-methylation of the ribose of cytidine 1402 (C1402) in 16S rRNA. The polypeptide is Ribosomal RNA small subunit methyltransferase I (Neisseria meningitidis serogroup A / serotype 4A (strain DSM 15465 / Z2491)).